The primary structure comprises 222 residues: Phosphoribosylformylglycinamidine synthase subunit PurQ (222 aa).

A Glutamine amidotransferase type-1 domain is found at 2–222 (KAAVITFPGS…RALLGGMALV (221 aa)). Cys-86 acts as the Nucleophile in catalysis. Catalysis depends on residues His-194 and Glu-196.

In terms of assembly, part of the FGAM synthase complex composed of 1 PurL, 1 PurQ and 2 PurS subunits.

The protein localises to the cytoplasm. It carries out the reaction N(2)-formyl-N(1)-(5-phospho-beta-D-ribosyl)glycinamide + L-glutamine + ATP + H2O = 2-formamido-N(1)-(5-O-phospho-beta-D-ribosyl)acetamidine + L-glutamate + ADP + phosphate + H(+). The catalysed reaction is L-glutamine + H2O = L-glutamate + NH4(+). It functions in the pathway purine metabolism; IMP biosynthesis via de novo pathway; 5-amino-1-(5-phospho-D-ribosyl)imidazole from N(2)-formyl-N(1)-(5-phospho-D-ribosyl)glycinamide: step 1/2. Functionally, part of the phosphoribosylformylglycinamidine synthase complex involved in the purines biosynthetic pathway. Catalyzes the ATP-dependent conversion of formylglycinamide ribonucleotide (FGAR) and glutamine to yield formylglycinamidine ribonucleotide (FGAM) and glutamate. The FGAM synthase complex is composed of three subunits. PurQ produces an ammonia molecule by converting glutamine to glutamate. PurL transfers the ammonia molecule to FGAR to form FGAM in an ATP-dependent manner. PurS interacts with PurQ and PurL and is thought to assist in the transfer of the ammonia molecule from PurQ to PurL. This Cereibacter sphaeroides (strain ATCC 17023 / DSM 158 / JCM 6121 / CCUG 31486 / LMG 2827 / NBRC 12203 / NCIMB 8253 / ATH 2.4.1.) (Rhodobacter sphaeroides) protein is Phosphoribosylformylglycinamidine synthase subunit PurQ.